A 115-amino-acid polypeptide reads, in one-letter code: U3-lycotoxin-Ls1a (115 aa).

The N-terminal stretch at 1 to 20 (MKFVLLFGVFLVTLFSYSSA) is a signal peptide. The propeptide occupies 21-44 (EMLDDFGQADEDELLSLIEKEEAR). Cystine bridges form between cysteine 48–cysteine 63, cysteine 55–cysteine 72, cysteine 62–cysteine 87, and cysteine 74–cysteine 85.

This sequence belongs to the neurotoxin 19 (CSTX) family. 01 subfamily. As to expression, expressed by the venom gland.

The protein resides in the secreted. This chain is U3-lycotoxin-Ls1a, found in Lycosa singoriensis (Wolf spider).